The sequence spans 1248 residues: Structural polyprotein (1248 aa).

Polar residues predominate over residues 1–10 (MEFIPTQTFY). Residues 1–104 (MEFIPTQTFY…KKKKPGRRER (104 aa)) form a disordered region. Residues 36–68 (RKAGQLAQLISAVNKLTMRAVPQQKPRKNRKNK) form a host transcription inhibition region. The span at 60–72 (KPRKNRKNKKQKQ) shows a compositional bias: basic residues. Positions 61 to 99 (PRKNRKNKKQKQKQQAPRNNMNQKKQPPKKKPAQKKKKP) match the Nuclear localization signal motif. Residues 73–85 (KQQAPRNNMNQKK) are compositionally biased toward low complexity. Residues 84–114 (KKQPPKKKPAQKKKKPGRRERMCMKIENDCI) form a binding to the viral RNA region. Over residues 86 to 101 (QPPKKKPAQKKKKPGR) the composition is skewed to basic residues. Positions 99-113 (PGRRERMCMKIENDC) are ribosome-binding. Cys-113 and Cys-128 are disulfide-bonded. Positions 113 to 261 (CIFEVKHEGK…KITPEGAEEW (149 aa)) constitute a Peptidase S3 domain. Residue His-139 is the Charge relay system of the active site. The short motif at 144–154 (IDNADLAKLAF) is the Nuclear export signal element. The tract at residues 155–160 (KRSSKY) is interaction with spike glycoprotein E2. The Charge relay system role is filled by Asp-161. The tract at residues 183–193 (PEGYYNWHHGA) is dimerization of the capsid protein. Ser-213 functions as the Charge relay system in the catalytic mechanism. Positions 219 to 223 (DNKGR) are dimerization of the capsid protein. Residues 262 to 274 (SLAIPVMCLLANT) form a functions as an uncleaved signal peptide for the precursor of protein E3/E2 region. Over 262 to 692 (SLAIPVMCLL…YYYELYPTMT (431 aa)) the chain is Extracellular. Disulfide bonds link Cys-269-Cys-278, Cys-283-Cys-287, Cys-286-Cys-318, Cys-344-Cys-450, Cys-347-Cys-353, Cys-416-Cys-430, Cys-478-Cys-591, Cys-526-Cys-550, and Cys-528-Cys-545. Asn-273 carries an N-linked (GlcNAc...) asparagine; by host glycan. Interaction with host Mxra8 receptor stretches follow at residues 351 to 354 (HSCH) and 387 to 389 (HDW). Interaction with host Mxra8 receptor stretches follow at residues 509-512 (QSGN) and 541-547 (VINNCKV). Asn-588 and Asn-670 each carry an N-linked (GlcNAc...) asparagine; by host glycan. Residues 693 to 713 (VVVVSVASFVLLSMVGVAVGM) form a helical membrane-spanning segment. The Cytoplasmic portion of the chain corresponds to 714 to 748 (CMCARRRCITPYELTPGATVPFLLSLICCIRTAKA). Residues 716–720 (CARRR) are interaction with the capsid protein. 3 S-palmitoyl cysteine; by host lipidation sites follow: Cys-721, Cys-741, and Cys-742. Residues 721-741 (CITPYELTPGATVPFLLSLIC) form a transient transmembrane before p62-6K protein processing region. Cys-721 and Cys-742 are joined by a disulfide. Topologically, residues 749–763 (ATYQEAAVYLWNEQQ) are extracellular. Residues 764–784 (PLFWLQAIIPLAALIVLCNCL) form a helical membrane-spanning segment. Residues 785–795 (RLLPCCCKTLT) are Cytoplasmic-facing. The chain crosses the membrane as a helical span at residues 796–816 (FLAVMSVGAHTVSAYEHVTVI). At 817–1224 (PNTVGVPYKT…AMSWVQKITG (408 aa)) the chain is on the extracellular side. 3 disulfide bridges follow: Cys-858–Cys-923, Cys-871–Cys-903, and Cys-877–Cys-887. Residues 893–910 (VYPFMWGGAYCFCDTENT) are E1 fusion peptide loop. 2 N-linked (GlcNAc...) asparagine; by host glycosylation sites follow: Asn-950 and Asn-1079. 4 cysteine pairs are disulfide-bonded: Cys-1068–Cys-1080, Cys-1110–Cys-1185, Cys-1115–Cys-1189, and Cys-1137–Cys-1179. A helical membrane pass occupies residues 1225–1245 (GVGLVVAVAALILIVVLCVSF). Residue Cys-1242 is the site of S-palmitoyl cysteine; by host attachment. The Cytoplasmic segment spans residues 1246-1248 (SRH).

As to quaternary structure, homodimer. Homomultimer. Interacts with host karyopherin KPNA4; this interaction allows the nuclear import of the viral capsid protein. Interacts with spike glycoprotein E2. Interacts with host IRAK1; the interaction leads to inhibition of IRAK1-dependent signaling. The precursor of protein E3/E2 and E1 form a heterodimer shortly after synthesis. In terms of assembly, interacts with spike glycoprotein E2. The precursor of protein E3/E2 and E1 form a heterodimer shortly after synthesis. Processing of the precursor of protein E3/E2 into E2 and E3 results in a heterodimer of the spike glycoproteins E2 and E1. Spike at virion surface are constituted of three E2-E1 heterodimers. After target cell attachment and endocytosis, E1 change conformation to form homotrimers. Interacts with 6K protein. Interacts with host MXRA8; this interaction mediates virus entry. The interaction involves 2 adjacent E2-E1 heterodimers. As to quaternary structure, interacts with spike glycoprotein E1. Processing of the precursor of protein E3/E2 into E2 and E3 results in a heterodimer of the spike glycoproteins E2 and E1. Spike at virion surface are constituted of a trimer of E2-E1 heterodimers. Interacts with 6K protein. Interacts with host MXRA8; this interaction mediates virus entry. The interaction involves 2 adjacent E2-E1 heterodimers. Oligomer. Interacts with spike glycoprotein E1. Interacts with spike glycoprotein E2. Post-translationally, structural polyprotein: Specific enzymatic cleavages in vivo yield mature proteins. Capsid protein is auto-cleaved during polyprotein translation, unmasking a signal peptide at the N-terminus of the precursor of E3/E2. The remaining polyprotein is then targeted to the host endoplasmic reticulum, where host signal peptidase cleaves it into pE2, 6K and E1 proteins. pE2 is further processed to mature E3 and E2 by host furin in trans-Golgi vesicle. In terms of processing, palmitoylated via thioester bonds. These palmitoylations may induce disruption of the C-terminus transmembrane. This would result in the reorientation of E2 C-terminus from lumenal to cytoplasmic side. N-glycosylated. Post-translationally, palmitoylated via thioester bonds.

The protein localises to the virion. The protein resides in the host cytoplasm. Its subcellular location is the host cell membrane. It is found in the host nucleus. It localises to the virion membrane. The protein localises to the host Golgi apparatus. The protein resides in the host trans-Golgi network. Its subcellular location is the host endoplasmic reticulum. The catalysed reaction is Autocatalytic release of the core protein from the N-terminus of the togavirus structural polyprotein by hydrolysis of a -Trp-|-Ser- bond.. Forms an icosahedral capsid with a T=4 symmetry composed of 240 copies of the capsid protein surrounded by a lipid membrane through which penetrate 80 spikes composed of trimers of E1-E2 heterodimers. The capsid protein binds to the viral RNA genome at a site adjacent to a ribosome binding site for viral genome translation following genome release. Possesses a protease activity that results in its autocatalytic cleavage from the nascent structural protein. Following its self-cleavage, the capsid protein transiently associates with ribosomes, and within several minutes the protein binds to viral RNA and rapidly assembles into icosahedric core particles. The resulting nucleocapsid eventually associates with the cytoplasmic domain of the spike glycoprotein E2 at the cell membrane, leading to budding and formation of mature virions. In case of infection, new virions attach to target cells and after clathrin-mediated endocytosis their membrane fuses with the host endosomal membrane. This leads to the release of the nucleocapsid into the cytoplasm, followed by an uncoating event necessary for the genomic RNA to become accessible. The uncoating might be triggered by the interaction of capsid proteins with ribosomes. Binding of ribosomes would release the genomic RNA since the same region is genomic RNA-binding and ribosome-binding. Specifically inhibits interleukin-1 receptor-associated kinase 1/IRAK1-dependent signaling during viral entry, representing a means by which the alphaviruses may evade innate immune detection and activation prior to viral gene expression. Degrades host cyclic GMP-AMP synthase (CGAS) thereby inhibiting the cGAS-STING pathway. Functionally, provides the signal sequence for the translocation of the precursor of protein E3/E2 to the host endoplasmic reticulum. Furin-cleaved E3 remains associated with spike glycoprotein E1 and mediates pH protection of the latter during the transport via the secretory pathway. After virion release from the host cell, the assembly protein E3 is gradually released in the extracellular space. In terms of biological role, plays a role in viral attachment to target host cell, by binding to the cell receptor MXRA8. Synthesized as a p62 precursor which is processed by furin at the cell membrane just before virion budding, giving rise to E2-E1 heterodimer. The p62-E1 heterodimer is stable, whereas E2-E1 is unstable and dissociate at low pH. p62 is processed at the last step, presumably to avoid E1 fusion activation before its final export to cell surface. E2 C-terminus contains a transitory transmembrane that would be disrupted by palmitoylation, resulting in reorientation of the C-terminal tail from lumenal to cytoplasmic side. This step is critical since E2 C-terminus is involved in budding by interacting with capsid proteins. This release of E2 C-terminus in cytoplasm occurs lately in protein export, and precludes premature assembly of particles at the endoplasmic reticulum membrane. Its function is as follows. Acts as a viroporin that participates in virus glycoprotein processing and transport to the plasma membrane, cell permeabilization and budding of viral particles. Disrupts the calcium homeostasis of the cell, probably at the endoplasmic reticulum level. This leads to cytoplasmic calcium elevation. Because of its lipophilic properties, the 6K protein is postulated to influence the selection of lipids that interact with the transmembrane domains of the glycoproteins, which, in turn, affects the deformability of the bilayer required for the extreme curvature that occurs as budding proceeds. Present in low amount in virions, about 3% compared to viral glycoproteins. Class II viral fusion protein. Fusion activity is inactive as long as E1 is bound to E2 in mature virion. After virus attachment to target cell via host MXRA8 and endocytosis, acidification of the endosome induce dissociation of E1/E2 heterodimer and concomitant trimerization of the E1 subunits. This E1 trimer is fusion active, and promotes release of viral nucleocapsid in cytoplasm after endosome and viral membrane fusion. Efficient fusion requires the presence of cholesterol and sphingolipid in the target membrane. This chain is Structural polyprotein, found in Chikungunya virus (strain Nagpur) (CHIKV).